Reading from the N-terminus, the 227-residue chain is Ribose-5-phosphate isomerase A (227 aa).

Residues 28-31, 85-88, and 98-101 each bind substrate; these read TGST, DGAD, and KGGG. Glutamate 107 acts as the Proton acceptor in catalysis. Lysine 125 contacts substrate.

It belongs to the ribose 5-phosphate isomerase family. Homodimer.

It carries out the reaction aldehydo-D-ribose 5-phosphate = D-ribulose 5-phosphate. The protein operates within carbohydrate degradation; pentose phosphate pathway; D-ribose 5-phosphate from D-ribulose 5-phosphate (non-oxidative stage): step 1/1. In terms of biological role, catalyzes the reversible conversion of ribose-5-phosphate to ribulose 5-phosphate. This Limosilactobacillus reuteri (strain DSM 20016) (Lactobacillus reuteri) protein is Ribose-5-phosphate isomerase A.